A 156-amino-acid polypeptide reads, in one-letter code: uncharacterized protein (156 aa).

A run of 2 helical transmembrane segments spans residues 46–66 (GLVLWVMAGLGFALGDFAGVV) and 114–134 (IIDILLAWTSFLLIISGIVAL).

Its subcellular location is the cell membrane. This is an uncharacterized protein from Haemophilus influenzae (strain ATCC 51907 / DSM 11121 / KW20 / Rd).